The following is a 447-amino-acid chain: Probable glycine dehydrogenase (decarboxylating) subunit 1 (447 aa).

This sequence belongs to the GcvP family. N-terminal subunit subfamily. In terms of assembly, the glycine cleavage system is composed of four proteins: P, T, L and H. In this organism, the P 'protein' is a heterodimer of two subunits.

It carries out the reaction N(6)-[(R)-lipoyl]-L-lysyl-[glycine-cleavage complex H protein] + glycine + H(+) = N(6)-[(R)-S(8)-aminomethyldihydrolipoyl]-L-lysyl-[glycine-cleavage complex H protein] + CO2. The glycine cleavage system catalyzes the degradation of glycine. The P protein binds the alpha-amino group of glycine through its pyridoxal phosphate cofactor; CO(2) is released and the remaining methylamine moiety is then transferred to the lipoamide cofactor of the H protein. The polypeptide is Probable glycine dehydrogenase (decarboxylating) subunit 1 (Sulfolobus acidocaldarius (strain ATCC 33909 / DSM 639 / JCM 8929 / NBRC 15157 / NCIMB 11770)).